The primary structure comprises 235 residues: Carboxy-S-adenosyl-L-methionine synthase (235 aa).

S-adenosyl-L-methionine-binding positions include Tyr35, 60–62, 83–84, Asn124, and Arg191; these read GCS and DN.

This sequence belongs to the class I-like SAM-binding methyltransferase superfamily. Cx-SAM synthase family. As to quaternary structure, homodimer.

It catalyses the reaction prephenate + S-adenosyl-L-methionine = carboxy-S-adenosyl-L-methionine + 3-phenylpyruvate + H2O. In terms of biological role, catalyzes the conversion of S-adenosyl-L-methionine (SAM) to carboxy-S-adenosyl-L-methionine (Cx-SAM). The protein is Carboxy-S-adenosyl-L-methionine synthase of Campylobacter jejuni subsp. doylei (strain ATCC BAA-1458 / RM4099 / 269.97).